A 185-amino-acid polypeptide reads, in one-letter code: Sarcoplasmic calcium-binding proteins I, III, and IV (185 aa).

EF-hand domains follow at residues phenylalanine 5–valine 41, serine 57–threonine 92, tryptophan 102–glutamine 137, and cysteine 138–alanine 173. Positions 19, 21, 23, 25, 30, 70, 72, 74, 81, 115, 117, 119, and 126 each coordinate Ca(2+).

In terms of biological role, like parvalbumins, SCPs seem to be more abundant in fast contracting muscles, but no functional relationship can be established from this distribution. The protein is Sarcoplasmic calcium-binding proteins I, III, and IV of Branchiostoma lanceolatum (Common lancelet).